Here is a 199-residue protein sequence, read N- to C-terminus: NADH-quinone oxidoreductase subunit C (199 aa).

It belongs to the complex I 30 kDa subunit family. As to quaternary structure, NDH-1 is composed of 14 different subunits. Subunits NuoB, C, D, E, F, and G constitute the peripheral sector of the complex.

It localises to the cell membrane. The catalysed reaction is a quinone + NADH + 5 H(+)(in) = a quinol + NAD(+) + 4 H(+)(out). In terms of biological role, NDH-1 shuttles electrons from NADH, via FMN and iron-sulfur (Fe-S) centers, to quinones in the respiratory chain. The immediate electron acceptor for the enzyme in this species is believed to be ubiquinone. Couples the redox reaction to proton translocation (for every two electrons transferred, four hydrogen ions are translocated across the cytoplasmic membrane), and thus conserves the redox energy in a proton gradient. This chain is NADH-quinone oxidoreductase subunit C, found in Polynucleobacter asymbioticus (strain DSM 18221 / CIP 109841 / QLW-P1DMWA-1) (Polynucleobacter necessarius subsp. asymbioticus).